The chain runs to 192 residues: Large ribosomal subunit protein uL5 (192 aa).

This sequence belongs to the universal ribosomal protein uL5 family. In terms of assembly, part of the 50S ribosomal subunit; part of the 5S rRNA/L5/L18/L25 subcomplex. Contacts the 5S rRNA and the P site tRNA. Forms a bridge to the 30S subunit in the 70S ribosome.

Its function is as follows. This is one of the proteins that bind and probably mediate the attachment of the 5S RNA into the large ribosomal subunit, where it forms part of the central protuberance. In the 70S ribosome it contacts protein S13 of the 30S subunit (bridge B1b), connecting the 2 subunits; this bridge is implicated in subunit movement. Contacts the P site tRNA; the 5S rRNA and some of its associated proteins might help stabilize positioning of ribosome-bound tRNAs. This Sphingopyxis alaskensis (strain DSM 13593 / LMG 18877 / RB2256) (Sphingomonas alaskensis) protein is Large ribosomal subunit protein uL5.